Here is a 76-residue protein sequence, read N- to C-terminus: ATP synthase subunit 9, mitochondrial (76 aa).

2 helical membrane passes run 14 to 34 (IATLGLGGAAIGIALVFVALI) and 52 to 72 (ILGFALSEACGLFCLMISFLL).

This sequence belongs to the ATPase C chain family. F-type ATPases have 2 components, CF(1) - the catalytic core - and CF(0) - the membrane proton channel. CF(1) has five subunits: alpha(3), beta(3), gamma(1), delta(1), epsilon(1). CF(0) has three main subunits: a, b and c.

Its subcellular location is the mitochondrion membrane. Mitochondrial membrane ATP synthase (F(1)F(0) ATP synthase or Complex V) produces ATP from ADP in the presence of a proton gradient across the membrane which is generated by electron transport complexes of the respiratory chain. F-type ATPases consist of two structural domains, F(1) - containing the extramembraneous catalytic core and F(0) - containing the membrane proton channel, linked together by a central stalk and a peripheral stalk. During catalysis, ATP synthesis in the catalytic domain of F(1) is coupled via a rotary mechanism of the central stalk subunits to proton translocation. Part of the complex F(0) domain. A homomeric c-ring of probably 10 subunits is part of the complex rotary element. The chain is ATP synthase subunit 9, mitochondrial (ATP9) from Candida albicans (strain SC5314 / ATCC MYA-2876) (Yeast).